The chain runs to 156 residues: Calglandulin (156 aa).

4 EF-hand domains span residues 8-43 (EQITEYKGIFEMFDEEGNGLVKTDDLESLMSLVGIN), 44-79 (PTKRDLANMAKDVDKDKKGTFNCDGFLALMGIYHEK), 82-117 (NQDEELRAAFKVFDKEHKGYIEWDTLKYVLMNAGEP), and 118-153 (LNEQEAELMMKEADKDGDGTIDYEEFVAMMTGESFK). The Ca(2+) site is built by Asp131, Asp133, Asp135, Thr137, and Glu142.

The protein belongs to the calmodulin family. Calglandulin subfamily. As to expression, expressed by the venom gland.

It localises to the cytoplasm. May be involved in the cellular control mechanism of the secretion of toxins from the gland into the venom. The sequence is that of Calglandulin from Bothrops insularis (Golden lancehead).